The sequence spans 240 residues: 1-(5-phosphoribosyl)-5-[(5-phosphoribosylamino)methylideneamino] imidazole-4-carboxamide isomerase (240 aa).

The active-site Proton acceptor is the Asp8. Catalysis depends on Asp129, which acts as the Proton donor.

This sequence belongs to the HisA/HisF family.

Its subcellular location is the cytoplasm. The catalysed reaction is 1-(5-phospho-beta-D-ribosyl)-5-[(5-phospho-beta-D-ribosylamino)methylideneamino]imidazole-4-carboxamide = 5-[(5-phospho-1-deoxy-D-ribulos-1-ylimino)methylamino]-1-(5-phospho-beta-D-ribosyl)imidazole-4-carboxamide. It participates in amino-acid biosynthesis; L-histidine biosynthesis; L-histidine from 5-phospho-alpha-D-ribose 1-diphosphate: step 4/9. The chain is 1-(5-phosphoribosyl)-5-[(5-phosphoribosylamino)methylideneamino] imidazole-4-carboxamide isomerase from Clostridioides difficile (strain 630) (Peptoclostridium difficile).